The sequence spans 459 residues: Ribulose bisphosphate carboxylase (459 aa).

Residue Asn111 coordinates substrate. Lys166 functions as the Proton acceptor in the catalytic mechanism. A substrate-binding site is contributed by Lys168. The Mg(2+) site is built by Lys191, Asp193, and Glu194. Lys191 bears the N6-carboxylysine mark. The active-site Proton acceptor is His287. The substrate site is built by Arg288, His321, and Ser368.

This sequence belongs to the RuBisCO large chain family. Type II subfamily. As to quaternary structure, homodimer. Mg(2+) is required as a cofactor.

The enzyme catalyses 2 (2R)-3-phosphoglycerate + 2 H(+) = D-ribulose 1,5-bisphosphate + CO2 + H2O. It catalyses the reaction D-ribulose 1,5-bisphosphate + O2 = 2-phosphoglycolate + (2R)-3-phosphoglycerate + 2 H(+). In terms of biological role, ruBisCO catalyzes two reactions: the carboxylation of D-ribulose 1,5-bisphosphate, the primary event in carbon dioxide fixation, as well as the oxidative fragmentation of the pentose substrate. Both reactions occur simultaneously and in competition at the same active site. The sequence is that of Ribulose bisphosphate carboxylase from Albidiferax ferrireducens (strain ATCC BAA-621 / DSM 15236 / T118) (Rhodoferax ferrireducens).